We begin with the raw amino-acid sequence, 609 residues long: Meiotically up-regulated gene 28 protein (609 aa).

RRM domains are found at residues 20-103 and 419-499; these read ISIY…YTHI and CNLF…YAEK.

The protein localises to the cytoplasm. In terms of biological role, has a role in sporulation. The chain is Meiotically up-regulated gene 28 protein (mug28) from Schizosaccharomyces pombe (strain 972 / ATCC 24843) (Fission yeast).